The following is a 390-amino-acid chain: Oxysterol-binding protein 10 (390 aa).

It belongs to the OSBP family.

This Dictyostelium discoideum (Social amoeba) protein is Oxysterol-binding protein 10 (osbJ).